The following is a 120-amino-acid chain: Chaperonin GroEL (120 aa).

Residue 23–27 (DGTTT) participates in ATP binding.

It belongs to the chaperonin (HSP60) family. Forms a cylinder of 14 subunits composed of two heptameric rings stacked back-to-back. Interacts with the co-chaperonin GroES.

The protein localises to the cytoplasm. It catalyses the reaction ATP + H2O + a folded polypeptide = ADP + phosphate + an unfolded polypeptide.. Functionally, together with its co-chaperonin GroES, plays an essential role in assisting protein folding. The GroEL-GroES system forms a nano-cage that allows encapsulation of the non-native substrate proteins and provides a physical environment optimized to promote and accelerate protein folding. The sequence is that of Chaperonin GroEL from Mycobacterium asiaticum.